The primary structure comprises 2163 residues: MGDYIWIEPVSGREFDVAIGARVISAEGRRIQVRDDDGNELWLTPERRIKAMHASSVQGVEDMISLGDLHEAGILRNLLIRYNDNLIYTYTGSILVAVNPYQILPIYTADQIKLYKERKIGELPPHIFAIGDNSYANMRRYGQDQCIVISGESGAGKTESTKLILQYLAAISGKHSWIEQQILEANPILEAFGNAKTVRNDNSSRFGKYIDIHFNNSGVIEGAEIEQYLLEKSRIVSQNAEERNYHIFYCLLAGLSSDEKRKLNLGYASDYRYLTGGGCIKCDGRNDAAEFADIRSAMKVLCFSDHEIWEILKLLAALLHTGNITYRATVIDNLDATEIPEHINVERVANLLEVPFQPFIDALTRKTLFAHGETVVSTLSRDQSMDVRDAFVKGIYGRLFVLIVKKINSAIYKPKSSTRSAIGVLDIFGFENFKHNSFEQFCINFANENLQQFFVRHIFKLEQEEYNHESINWQHIEFVDNQDALDLIAIKQLNIMALIDEESKFPKGTDQTMLAKLHKTHGTHRNYLKPKSDINTSFGLNHFAGVVFYDTRGFLEKNRDTFSADLLQLISSSTNRFLQMVFAEDIGMGAETRKRTPTLSTQFKKSLDSLMKTLSSCQPFFIRCIKPNELKKPMMFDRALCCRQLRYSGMMETIRIRRAGYPIRHKFKDFVERYRFLISGIPPAHRTDCRLATSKICASVLGRSDYQLGHTKVFLKDAHDLFLEQERDRVLTRKILILQRSIRGWVYRRRFLRMRQAAVTIQKFWKGYAQRQRYKKMKIGYMRLQALIRSRVLSHRFRHLRGHIVRLQARIRGYLVRREYGLKMWAVIKIQSHVRRMIAMNRYQKLKLEYRRHHEALRLRRMEEEELKHQGNKRAKEIAEQHYRDRLNEIERKEIEQELEERRRVEVKKNIINDAARKADEPVDDSKLVEAMFDFLPDSSSEAPTPHGGRETSVFNDLPVNQDNHEDIIGPIHTISEDEEDLSEFKFQKFAATYFQGNITHFYSRKPLKHPLLPLHTQGDQLAAQALWITILRFTGDLPEPRYHTMDRDNTSVMSKVTATLGRNFIRSKEFQEAQMMGLDPEAFLKQKPRSIRHKLVSLTLKRKNKLGEDVRRRLQDEEYTADSYQSWLESRPTSNLEKLHFIIGHGILRAELRDEIYCQICKQLTNNPSKSSHARGWILLSLCVGCFAPSEKFVNYLRSFIREGPPGYAPYCEERLKRTFNNGTRNQPPSWLELQATKSKKPIMLPITFMDGNTKTLLADSATTARELCNQLSDKIALKDQFGFSLYIALFDKVSSLGSGGDHVMDAISQCEQYAKEQGAQERNAPWRLFFRKEIFAPWHNPIEDQVATNLIYQQVVRGVKFGEYRCDKEEDLAMIAAQQYYIEYNTDMSMDRLYTLLPNFIPDYCLTGIEKAIDRWAALVLQAYKKSYYLKDKAAALKVKEDVVSYAKYKWPLLFSRFYEAYRNSGPNLPKNDVIIAVNWTGVYVVDDQEQVLLELSFPEITAVSSQKTNKVFTQTFSLSTVRNEEFTFQSPNAEDIRDLVVYFLEGLKKRSKFVIALQDYKAPGEGTSFLSFLKGDLIILEDESTGESVLNSGWCIGCCERTQERGDFPAEIVYVLPSLTKPPPDILALFSVEDAHHGKRLNSIHSNGGTETREHPHTLADYSLDHFRPPPKRTMSKALSTLSSKRGGDELWRYSREPLKQPLLKKLLAKEELAEEACLAFIAIMKYMGDLPSKRPRIGNEITDHIFDGPLKHEILRDEIYCQLMKQLTDNRNRMSEERGWELMWLSTGLFACSQQLLKELTVFLRTRRHPISQDSLHRLQKTIRNGQRKYPPHQVEVEAIQHKTTQIFHKVYFPDDTDEAFEVDSSTRAKDFCQNISQRLNLRSSEGFSLFVKIADKVISVPEGDFFFDFVRHLTDWIKKARPTRDGTNPQFTYQVFFMKKLWTNTVPGKDKNADLIFHYHQELPKLLRGYHKCSKEEAVKLAALVYRVRFGESKQELQAIPQMLRELVPSDLIKLQTTNDWKRSIVAAYNQDAGMSPEDAKVTFLKIVYRWPTFGSAFFEVKQTTEPNYPEMLLIAINKHGVSLIHPSSKDILVTHPFTRISNWSSGNTYFHMTIGNLVRGSKLLCETSLGYKMDDLLTSYISLMLTNMNKQRTIRIK.

Residues 58–728 (QGVEDMISLG…HDLFLEQERD (671 aa)) form the Myosin motor domain. 151–158 (GESGAGKT) contacts ATP. 2 actin-binding regions span residues 607–629 (LDSL…KPNE) and 707–721 (QLGH…AHDL). 4 consecutive IQ domains span residues 731–753 (LTRK…RFLR), 754–783 (MRQA…GYMR), 800–822 (LRGH…EYGL), and 823–852 (KMWA…EYRR). A coiled-coil region spans residues 886 to 914 (RLNEIERKEIEQELEERRRVEVKKNIIND). The disordered stretch occupies residues 937 to 958 (PDSSSEAPTPHGGRETSVFNDL). The region spanning 1003–1239 (YSRKPLKHPL…PSWLELQATK (237 aa)) is the MyTH4 1 domain. In terms of domain architecture, FERM 1 spans 1244 to 1554 (IMLPITFMDG…YFLEGLKKRS (311 aa)). One can recognise an SH3 domain in the interval 1552–1621 (KRSKFVIALQ…PAEIVYVLPS (70 aa)). One can recognise a MyTH4 2 domain in the interval 1697–1845 (YSREPLKQPL…PHQVEVEAIQ (149 aa)). One can recognise an FERM 2 domain in the interval 1851 to 2154 (IFHKVYFPDD…SYISLMLTNM (304 aa)).

This sequence belongs to the TRAFAC class myosin-kinesin ATPase superfamily. Myosin family. In terms of assembly, homodimerizes in a two headed molecule through the formation of a coiled-coil rod.

The protein localises to the cytoplasm. In terms of biological role, myosins are actin-based motor molecules with ATPase activity. Unconventional myosins serve in intracellular movements: can function in cells as a single-molecule cargo transporter. A very slow and high-duty-ratio motor, may be suitable for tension maintenance of actin filaments. Their highly divergent tails are presumed to bind to membranous compartments, which would be moved relative to actin filaments. Plays a key role in the formation of cellular projections and other actin-based functions required for embryonic and larval viability. Necessary for auditory transduction: plays a role in Johnston organ (JO) organization by functioning in scolopidial apical attachment and therefore to acoustic stimulus propagation from the antenna a2/a3 joint to transducing elements. This chain is Myosin-VIIa, found in Aedes aegypti (Yellowfever mosquito).